Consider the following 300-residue polypeptide: Acetylglutamate kinase (300 aa).

Substrate-binding positions include Gly73 to Gly74, Arg95, and Asn197.

It belongs to the acetylglutamate kinase family. ArgB subfamily.

The protein localises to the cytoplasm. It catalyses the reaction N-acetyl-L-glutamate + ATP = N-acetyl-L-glutamyl 5-phosphate + ADP. Its pathway is amino-acid biosynthesis; L-arginine biosynthesis; N(2)-acetyl-L-ornithine from L-glutamate: step 2/4. Functionally, catalyzes the ATP-dependent phosphorylation of N-acetyl-L-glutamate. The chain is Acetylglutamate kinase from Polynucleobacter necessarius subsp. necessarius (strain STIR1).